We begin with the raw amino-acid sequence, 729 residues long: Elongation factor 2 (729 aa).

The tr-type G domain maps to 19 to 262; that stretch reads EQIRNIAIAA…MVCEHFPNPV (244 aa). GTP-binding positions include 28 to 35, 94 to 98, and 148 to 151; these read AHVDHGKT, DTPGH, and NKVD. At H597 the chain carries Diphthamide.

The protein belongs to the TRAFAC class translation factor GTPase superfamily. Classic translation factor GTPase family. EF-G/EF-2 subfamily.

The protein resides in the cytoplasm. Its function is as follows. Catalyzes the GTP-dependent ribosomal translocation step during translation elongation. During this step, the ribosome changes from the pre-translocational (PRE) to the post-translocational (POST) state as the newly formed A-site-bound peptidyl-tRNA and P-site-bound deacylated tRNA move to the P and E sites, respectively. Catalyzes the coordinated movement of the two tRNA molecules, the mRNA and conformational changes in the ribosome. This Natronomonas pharaonis (strain ATCC 35678 / DSM 2160 / CIP 103997 / JCM 8858 / NBRC 14720 / NCIMB 2260 / Gabara) (Halobacterium pharaonis) protein is Elongation factor 2.